Here is a 251-residue protein sequence, read N- to C-terminus: 5'-nucleotidase SurE 1 (251 aa).

The a divalent metal cation site is built by D8, D9, S39, and N95.

This sequence belongs to the SurE nucleotidase family. A divalent metal cation is required as a cofactor.

Its subcellular location is the cytoplasm. It catalyses the reaction a ribonucleoside 5'-phosphate + H2O = a ribonucleoside + phosphate. Its function is as follows. Nucleotidase that shows phosphatase activity on nucleoside 5'-monophosphates. This Thermus thermophilus (strain ATCC BAA-163 / DSM 7039 / HB27) protein is 5'-nucleotidase SurE 1.